Reading from the N-terminus, the 200-residue chain is Exopolysaccharide production protein PSS (200 aa).

It belongs to the bacterial sugar transferase family.

This is Exopolysaccharide production protein PSS (pss) from Rhizobium leguminosarum bv. phaseoli.